A 55-amino-acid chain; its full sequence is Large ribosomal subunit protein uL15 (55 aa).

Belongs to the universal ribosomal protein uL15 family. In terms of assembly, part of the 50S ribosomal subunit.

Binds to the 23S rRNA. The chain is Large ribosomal subunit protein uL15 (rplO) from Lactococcus lactis subsp. cremoris (Streptococcus cremoris).